A 202-amino-acid polypeptide reads, in one-letter code: Nudix hydrolase 13, mitochondrial (202 aa).

The Nudix hydrolase domain occupies 18 to 167 (NFRLVSGCIP…WMQSALEEFL (150 aa)). The short motif at 65–86 (GGWEDDETVLEAASREAMEEAG) is the Nudix box element. Residues Glu-80 and Glu-84 each coordinate Mg(2+).

The protein belongs to the Nudix hydrolase family. In terms of assembly, monomer. The cofactor is Mg(2+). As to expression, expressed in roots, leaves, stems and inflorescences.

It is found in the mitochondrion. Its activity is regulated as follows. Inhibited by fluoride. Functionally, mediates the hydrolysis of some nucleoside diphosphate derivatives. Can use diadenosine 5',5'''-P(1)P(6) hexaphosphate (Ap(6)A), diadenosine 5',5'''-P(1)P(5) pentaphosphate (Ap(5)A) and adenosine tetraphosphate (p(4)A) as substrates, but not diadenosine 5',5'''-P(1)P(4) tetraphosphate (Ap(4)A), diadenosine 5',5'''-P(1)P(3) triphosphate (Ap(3)A), deoxyribonucleoside triphosphates, ribonucleoside triphosphates, diphosphoinositol pentakisphosphate (PP-InsP(5)) and 5-phospho-alpha-D-ribosyl diphosphate (PRPP). This is Nudix hydrolase 13, mitochondrial (NUDT13) from Arabidopsis thaliana (Mouse-ear cress).